The sequence spans 464 residues: Desmin (464 aa).

Ser2 carries the blocked amino end (Ser) modification. A head region spans residues 2 to 100 (SQSYSSSQRV…QEFLQTRTNE (99 aa)). Residues Ser7 and Ser23 each carry the phosphoserine; by CDK1 modification. Thr65 bears the Phosphothreonine; by CDK1 mark. The IF rod domain occupies 100–408 (EKVELQELND…KLLEGEENRI (309 aa)). The segment at 101–133 (KVELQELNDRFANYIEKVRFLEQQNALMVAEVN) is coil 1A. The segment at 134–143 (RLRGKEPTRV) is linker 1. The tract at residues 144–244 (AEMYEEELRE…HEEEIRELQA (101 aa)) is coil 1B. The segment at 245–260 (QLQEQHIQVEMDISKP) is linker 12. The segment at 261–279 (DLTAALRDIRAQYESIAAK) is coil 2A. Residues 280 to 287 (NIAEAEEW) form a linker 2 region. Residues 288–404 (YKSKVSDLTQ…ATYRKLLEGE (117 aa)) are coil 2B. A tail region spans residues 405–464 (ENRISIPMHQTFASALNFRETSPDQRGSEVHTKKTVMIKTIETRDGEVVSEATQQQHEVL).

This sequence belongs to the intermediate filament family. In terms of assembly, homomer.

The protein resides in the cytoplasm. It localises to the myofibril. It is found in the sarcomere. Its subcellular location is the z line. The protein localises to the cell membrane. The protein resides in the sarcolemma. Its function is as follows. Muscle-specific type III intermediate filament essential for proper muscular structure and function. Plays a crucial role in maintaining the structure of sarcomeres, inter-connecting the Z-disks and forming the myofibrils, linking them not only to the sarcolemmal cytoskeleton, but also to the nucleus and mitochondria, thus providing strength for the muscle fiber during activity. In adult striated muscle they form a fibrous network connecting myofibrils to each other and to the plasma membrane from the periphery of the Z-line structures. In Gallus gallus (Chicken), this protein is Desmin (DES).